A 119-amino-acid chain; its full sequence is UPF0102 protein FP2501 (119 aa).

This sequence belongs to the UPF0102 family.

This Flavobacterium psychrophilum (strain ATCC 49511 / DSM 21280 / CIP 103535 / JIP02/86) protein is UPF0102 protein FP2501.